Consider the following 254-residue polypeptide: Type II restriction enzyme HpaI (254 aa).

It carries out the reaction Endonucleolytic cleavage of DNA to give specific double-stranded fragments with terminal 5'-phosphates.. Functionally, a P subtype restriction enzyme that recognizes the double-stranded sequence 5'-GTTAAC-3' and cleaves after T-3. This Haemophilus parainfluenzae protein is Type II restriction enzyme HpaI (hpaIR).